The primary structure comprises 83 residues: BmKBT-like peptide (83 aa).

The signal sequence occupies residues 1 to 19; sequence MKAALLLVISTLMLIGVLT. The 61-residue stretch at 21–81 folds into the LCN-type CS-alpha/beta domain; it reads KSGYPIQHDG…TWSRETNKCR (61 aa). 4 cysteine pairs are disulfide-bonded: Cys-31/Cys-80, Cys-35/Cys-54, Cys-41/Cys-61, and Cys-45/Cys-63. A propeptide (removed by a carboxypeptidase) is located at residue Lys-83.

The protein belongs to the long (4 C-C) scorpion toxin superfamily. Sodium channel inhibitor family. Beta subfamily. Expressed by the venom gland.

It is found in the secreted. Its function is as follows. Sodium channel inhibitor. Possesses potent toxicity in mice but induces only paralysis in cotton bollworm. This chain is BmKBT-like peptide, found in Olivierus martensii (Manchurian scorpion).